A 366-amino-acid chain; its full sequence is Tudor domain-containing protein 10 (366 aa).

The RRM domain maps to 34–107 (TEVYVGNLPL…RKLFVNTSKR (74 aa)). In terms of domain architecture, Tudor spans 210–317 (FWAMHVTEAL…PLTQPFMLEK (108 aa)). Residues 216–237 (TEALHQNMQALFSTLAQAEEQQ) are a coiled coil.

This is Tudor domain-containing protein 10 (TDRD10) from Homo sapiens (Human).